We begin with the raw amino-acid sequence, 176 residues long: Ribosome maturation factor RimM (176 aa).

Residues 97–176 enclose the PRC barrel domain; the sequence is DNDFYHRDLI…QIVVDWDPDF (80 aa).

Belongs to the RimM family. Binds ribosomal protein uS19.

The protein localises to the cytoplasm. In terms of biological role, an accessory protein needed during the final step in the assembly of 30S ribosomal subunit, possibly for assembly of the head region. Essential for efficient processing of 16S rRNA. May be needed both before and after RbfA during the maturation of 16S rRNA. It has affinity for free ribosomal 30S subunits but not for 70S ribosomes. The chain is Ribosome maturation factor RimM from Shewanella denitrificans (strain OS217 / ATCC BAA-1090 / DSM 15013).